A 101-amino-acid polypeptide reads, in one-letter code: NAD(P)H-quinone oxidoreductase subunit 4L, chloroplastic (101 aa).

Helical transmembrane passes span 2–22 (ILEH…YGLI), 32–52 (MCLE…SDFF), and 61–81 (IFCI…LAIV).

The protein belongs to the complex I subunit 4L family. NDH is composed of at least 16 different subunits, 5 of which are encoded in the nucleus.

The protein resides in the plastid. The protein localises to the chloroplast thylakoid membrane. The catalysed reaction is a plastoquinone + NADH + (n+1) H(+)(in) = a plastoquinol + NAD(+) + n H(+)(out). The enzyme catalyses a plastoquinone + NADPH + (n+1) H(+)(in) = a plastoquinol + NADP(+) + n H(+)(out). NDH shuttles electrons from NAD(P)H:plastoquinone, via FMN and iron-sulfur (Fe-S) centers, to quinones in the photosynthetic chain and possibly in a chloroplast respiratory chain. The immediate electron acceptor for the enzyme in this species is believed to be plastoquinone. Couples the redox reaction to proton translocation, and thus conserves the redox energy in a proton gradient. The polypeptide is NAD(P)H-quinone oxidoreductase subunit 4L, chloroplastic (Arabidopsis thaliana (Mouse-ear cress)).